The chain runs to 451 residues: Glycine--tRNA ligase (451 aa).

Substrate contacts are provided by Arg101 and Glu151. ATP-binding positions include 183 to 185 (RNE), 193 to 198 (FRTCEF), 267 to 268 (EL), and 312 to 315 (GLTR). 198–202 (FEQME) contributes to the substrate binding site. 308-312 (ETSAG) serves as a coordination point for substrate.

The protein belongs to the class-II aminoacyl-tRNA synthetase family. Homodimer.

It localises to the cytoplasm. It catalyses the reaction tRNA(Gly) + glycine + ATP = glycyl-tRNA(Gly) + AMP + diphosphate. Its function is as follows. Catalyzes the attachment of glycine to tRNA(Gly). The protein is Glycine--tRNA ligase of Treponema denticola (strain ATCC 35405 / DSM 14222 / CIP 103919 / JCM 8153 / KCTC 15104).